A 109-amino-acid polypeptide reads, in one-letter code: uncharacterized protein (109 aa).

The protein resides in the mitochondrion. This is an uncharacterized protein from Arabidopsis thaliana (Mouse-ear cress).